The following is a 227-amino-acid chain: Cytidylate kinase (227 aa).

Gly-12 to Thr-20 lines the ATP pocket.

It belongs to the cytidylate kinase family. Type 1 subfamily.

The protein resides in the cytoplasm. It catalyses the reaction CMP + ATP = CDP + ADP. It carries out the reaction dCMP + ATP = dCDP + ADP. This Photorhabdus laumondii subsp. laumondii (strain DSM 15139 / CIP 105565 / TT01) (Photorhabdus luminescens subsp. laumondii) protein is Cytidylate kinase.